The primary structure comprises 155 residues: Cytochrome c-type biogenesis protein CcmE (155 aa).

Residues 1-8 (MNPVRKKR) lie on the Cytoplasmic side of the membrane. Residues 9 to 29 (LFIVLAILAGVGIAVALALSA) form a helical; Signal-anchor for type II membrane protein membrane-spanning segment. Residues 30–155 (LQQNINLFYT…YEGGKQEYAK (126 aa)) are Periplasmic-facing. Histidine 124 and tyrosine 128 together coordinate heme.

The protein belongs to the CcmE/CycJ family.

Its subcellular location is the cell inner membrane. In terms of biological role, heme chaperone required for the biogenesis of c-type cytochromes. Transiently binds heme delivered by CcmC and transfers the heme to apo-cytochromes in a process facilitated by CcmF and CcmH. The sequence is that of Cytochrome c-type biogenesis protein CcmE from Stutzerimonas stutzeri (strain A1501) (Pseudomonas stutzeri).